A 549-amino-acid polypeptide reads, in one-letter code: Glucose-6-phosphate isomerase (549 aa).

The Proton donor role is filled by Glu-353. Catalysis depends on residues His-384 and Lys-513.

Belongs to the GPI family.

The protein localises to the cytoplasm. It catalyses the reaction alpha-D-glucose 6-phosphate = beta-D-fructose 6-phosphate. It functions in the pathway carbohydrate biosynthesis; gluconeogenesis. Its pathway is carbohydrate degradation; glycolysis; D-glyceraldehyde 3-phosphate and glycerone phosphate from D-glucose: step 2/4. Catalyzes the reversible isomerization of glucose-6-phosphate to fructose-6-phosphate. The sequence is that of Glucose-6-phosphate isomerase from Brucella abortus (strain S19).